The primary structure comprises 34 residues: Kappa-theraphotoxin-Scg1a (34 aa).

3 disulfides stabilise this stretch: Cys2/Cys16, Cys9/Cys21, and Cys15/Cys28. The involved in active face stretch occupies residues 4–6; that stretch reads YLF.

This sequence belongs to the neurotoxin 10 (Hwtx-1) family. 09 (HaTx) subfamily. In terms of tissue distribution, expressed by the venom gland.

It localises to the secreted. Its function is as follows. Reversibly inhibits potassium currents in oocytes expressing Kv2.1/KCNB1 channels (Kd=2.7 uM). Acts by shifting activation of the channel to more depolarized voltages. The toxin may bind to the S3b-S4 helices of the voltage sensor paddle. One, two, three or four toxin molecules may bind the Kv2.1/KCNB1 channel. It shows low to moderate affinity for lipid bilayers. It partitions into the bilayer membrane, where it stabilizes at the water/membrane interface. This Stromatopelma calceatum griseipes (Feather leg baboon tarantula) protein is Kappa-theraphotoxin-Scg1a.